A 353-amino-acid polypeptide reads, in one-letter code: Probable tRNA pseudouridine synthase B (353 aa).

Residue D45 is the Nucleophile of the active site. Positions 211 to 287 constitute a PUA domain; it reads YPKIVAKKSA…DHIFVEAKHG (77 aa). The tract at residues 292 to 353 is disordered; sequence VRDREKDVQR…TGVHRRPGSH (62 aa). The segment covering 309–328 has biased composition (basic and acidic residues); the sequence is NIRDAAHGPDSRTGRGRKET. Residues 336–353 are compositionally biased toward basic residues; sequence RVRKLQNKTGVHRRPGSH.

Belongs to the pseudouridine synthase TruB family. Type 2 subfamily.

The catalysed reaction is uridine(55) in tRNA = pseudouridine(55) in tRNA. In terms of biological role, could be responsible for synthesis of pseudouridine from uracil-55 in the psi GC loop of transfer RNAs. This chain is Probable tRNA pseudouridine synthase B, found in Thermoplasma volcanium (strain ATCC 51530 / DSM 4299 / JCM 9571 / NBRC 15438 / GSS1).